We begin with the raw amino-acid sequence, 396 residues long: Ribosomal RNA large subunit methyltransferase I (396 aa).

The PUA domain occupies 2 to 81; that stretch reads SVRLVLAKGR…ESIDIAFFSR (80 aa).

The protein belongs to the methyltransferase superfamily. RlmI family.

It localises to the cytoplasm. It catalyses the reaction cytidine(1962) in 23S rRNA + S-adenosyl-L-methionine = 5-methylcytidine(1962) in 23S rRNA + S-adenosyl-L-homocysteine + H(+). Specifically methylates the cytosine at position 1962 (m5C1962) of 23S rRNA. In Escherichia coli O157:H7, this protein is Ribosomal RNA large subunit methyltransferase I.